We begin with the raw amino-acid sequence, 479 residues long: Ribulose bisphosphate carboxylase large chain (479 aa).

The propeptide occupies 1 to 2; it reads MS. The substrate site is built by Asn-123 and Thr-173. The active-site Proton acceptor is Lys-175. Lys-177 provides a ligand contact to substrate. Mg(2+)-binding residues include Lys-201, Asp-203, and Glu-204. Lys-201 carries the N6-carboxylysine modification. Ser-208 bears the Phosphoserine mark. Residue His-294 is the Proton acceptor of the active site. The substrate site is built by Arg-295 and His-327. A Phosphothreonine modification is found at Thr-330. Ser-379 lines the substrate pocket.

It belongs to the RuBisCO large chain family. Type I subfamily. Heterohexadecamer of 8 large chains and 8 small chains; disulfide-linked. The disulfide link is formed within the large subunit homodimers. Requires Mg(2+) as cofactor. The disulfide bond which can form in the large chain dimeric partners within the hexadecamer appears to be associated with oxidative stress and protein turnover.

The protein resides in the plastid. The protein localises to the chloroplast. It catalyses the reaction 2 (2R)-3-phosphoglycerate + 2 H(+) = D-ribulose 1,5-bisphosphate + CO2 + H2O. The enzyme catalyses D-ribulose 1,5-bisphosphate + O2 = 2-phosphoglycolate + (2R)-3-phosphoglycerate + 2 H(+). Its function is as follows. RuBisCO catalyzes two reactions: the carboxylation of D-ribulose 1,5-bisphosphate, the primary event in carbon dioxide fixation, as well as the oxidative fragmentation of the pentose substrate in the photorespiration process. Both reactions occur simultaneously and in competition at the same active site. This Barbarea verna (Land cress) protein is Ribulose bisphosphate carboxylase large chain.